Reading from the N-terminus, the 402-residue chain is uncharacterized protein (402 aa).

It belongs to the peptidase M20 family.

This is an uncharacterized protein from Sinorhizobium fredii (strain NBRC 101917 / NGR234).